A 113-amino-acid chain; its full sequence is CRISPR-associated endoribonuclease Cas2 2 (113 aa).

A Mg(2+)-binding site is contributed by aspartate 32.

The protein belongs to the CRISPR-associated endoribonuclease Cas2 protein family. Homodimer, forms a heterotetramer with a Cas1 homodimer. Mg(2+) is required as a cofactor.

Functionally, CRISPR (clustered regularly interspaced short palindromic repeat), is an adaptive immune system that provides protection against mobile genetic elements (viruses, transposable elements and conjugative plasmids). CRISPR clusters contain sequences complementary to antecedent mobile elements and target invading nucleic acids. CRISPR clusters are transcribed and processed into CRISPR RNA (crRNA). Functions as a ssRNA-specific endoribonuclease. Involved in the integration of spacer DNA into the CRISPR cassette. The chain is CRISPR-associated endoribonuclease Cas2 2 (cas22) from Nitrosomonas europaea (strain ATCC 19718 / CIP 103999 / KCTC 2705 / NBRC 14298).